Reading from the N-terminus, the 111-residue chain is MENWREISEDIVSSLLEDGSDPEILYEVEHHFVCEDFPKLEQAALAAFKLGYDVEEPAELELEDGAKIWSFDIVVESELDVDVIMEDVDKLAALAVECEVEYDGWGTYFQE.

Belongs to the RraB family. As to quaternary structure, interacts with the C-terminal region of Rne.

The protein localises to the cytoplasm. Functionally, globally modulates RNA abundance by binding to RNase E (Rne) and regulating its endonucleolytic activity. Can modulate Rne action in a substrate-dependent manner by altering the composition of the degradosome. The protein is Regulator of ribonuclease activity B of Pseudoalteromonas translucida (strain TAC 125).